Here is a 136-residue protein sequence, read N- to C-terminus: ATP synthase F(0) complex subunit C1, mitochondrial (136 aa).

Residues 1–61 constitute a mitochondrion transit peptide; the sequence is MQTAGALFIS…REFQTSVVSR (61 aa). A helical transmembrane segment spans residues 77–97; it reads VGVAGSGAGIGTVFGSLIIGY. Lys104 is modified (N6,N6,N6-trimethyllysine). The helical transmembrane segment at 112–132 threads the bilayer; sequence ILGFALSEAMGLFCLMVAFLI.

The protein belongs to the ATPase C chain family. In terms of assembly, homooctamer; the c-ring consists of eight c subunits forming a circle, and each subunit adopts a hairpin shape. Component of the ATP synthase complex composed at least of ATP5F1A/subunit alpha, ATP5F1B/subunit beta, ATP5MC1/subunit c (homooctomer), MT-ATP6/subunit a, MT-ATP8/subunit 8, ATP5ME/subunit e, ATP5MF/subunit f, ATP5MG/subunit g, ATP5MK/subunit k, ATP5MJ/subunit j, ATP5F1C/subunit gamma, ATP5F1D/subunit delta, ATP5F1E/subunit epsilon, ATP5PF/subunit F6, ATP5PB/subunit b, ATP5PD/subunit d, ATP5PO/subunit OSCP. ATP synthase complex consists of a soluble F(1) head domain (subunits alpha(3) and beta(3)) - the catalytic core - and a membrane F(0) domain - the membrane proton channel (subunits c, a, 8, e, f, g, k and j). These two domains are linked by a central stalk (subunits gamma, delta, and epsilon) rotating inside the F1 region and a stationary peripheral stalk (subunits F6, b, d, and OSCP). Interacts with TMEM70 (homooligomer form); this interaction facilitates the oligomer formation of subunit c/ATP5MC1 (c-ring) and the c-ring membrane insertion and also protects ATP5MC1 against intramitochondrial proteolysis. In terms of processing, trimethylated by ATPSCKMT at Lys-104. Methylation is required for proper incorporation of the C subunit into the ATP synthase complex and mitochondrial respiration.

The protein resides in the mitochondrion membrane. The enzyme catalyses H(+)(in) = H(+)(out). Subunit c, of the mitochondrial membrane ATP synthase complex (F(1)F(0) ATP synthase or Complex V) that produces ATP from ADP in the presence of a proton gradient across the membrane which is generated by electron transport complexes of the respiratory chain. ATP synthase complex consist of a soluble F(1) head domain - the catalytic core - and a membrane F(1) domain - the membrane proton channel. These two domains are linked by a central stalk rotating inside the F(1) region and a stationary peripheral stalk. During catalysis, ATP synthesis in the catalytic domain of F(1) is coupled via a rotary mechanism of the central stalk subunits to proton translocation. With the subunit a (MT-ATP6), forms the proton-conducting channel in the F(0) domain, that contains two crucial half-channels (inlet and outlet) that facilitate proton movement from the mitochondrial intermembrane space (IMS) into the matrix. Protons are taken up via the inlet half-channel and released through the outlet half-channel, following a Grotthuss mechanism. The polypeptide is ATP synthase F(0) complex subunit C1, mitochondrial (Homo sapiens (Human)).